The chain runs to 96 residues: Large ribosomal subunit protein uL23 (96 aa).

The protein belongs to the universal ribosomal protein uL23 family. In terms of assembly, part of the 50S ribosomal subunit. Contacts protein L29, and trigger factor when it is bound to the ribosome.

Its function is as follows. One of the early assembly proteins it binds 23S rRNA. One of the proteins that surrounds the polypeptide exit tunnel on the outside of the ribosome. Forms the main docking site for trigger factor binding to the ribosome. This Bacillus mycoides (strain KBAB4) (Bacillus weihenstephanensis) protein is Large ribosomal subunit protein uL23.